The following is a 213-amino-acid chain: Thiamine-phosphate synthase (213 aa).

4-amino-2-methyl-5-(diphosphooxymethyl)pyrimidine is bound by residues 38–42 (QLRIK) and Asn70. Positions 71 and 90 each coordinate Mg(2+). Position 109 (Ser109) interacts with 4-amino-2-methyl-5-(diphosphooxymethyl)pyrimidine. 135–137 (TQT) serves as a coordination point for 2-[(2R,5Z)-2-carboxy-4-methylthiazol-5(2H)-ylidene]ethyl phosphate. Lys138 serves as a coordination point for 4-amino-2-methyl-5-(diphosphooxymethyl)pyrimidine. 2-[(2R,5Z)-2-carboxy-4-methylthiazol-5(2H)-ylidene]ethyl phosphate contacts are provided by residues Gly168 and 188-189 (VS).

The protein belongs to the thiamine-phosphate synthase family. Mg(2+) is required as a cofactor.

The catalysed reaction is 2-[(2R,5Z)-2-carboxy-4-methylthiazol-5(2H)-ylidene]ethyl phosphate + 4-amino-2-methyl-5-(diphosphooxymethyl)pyrimidine + 2 H(+) = thiamine phosphate + CO2 + diphosphate. The enzyme catalyses 2-(2-carboxy-4-methylthiazol-5-yl)ethyl phosphate + 4-amino-2-methyl-5-(diphosphooxymethyl)pyrimidine + 2 H(+) = thiamine phosphate + CO2 + diphosphate. It carries out the reaction 4-methyl-5-(2-phosphooxyethyl)-thiazole + 4-amino-2-methyl-5-(diphosphooxymethyl)pyrimidine + H(+) = thiamine phosphate + diphosphate. The protein operates within cofactor biosynthesis; thiamine diphosphate biosynthesis; thiamine phosphate from 4-amino-2-methyl-5-diphosphomethylpyrimidine and 4-methyl-5-(2-phosphoethyl)-thiazole: step 1/1. In terms of biological role, condenses 4-methyl-5-(beta-hydroxyethyl)thiazole monophosphate (THZ-P) and 2-methyl-4-amino-5-hydroxymethyl pyrimidine pyrophosphate (HMP-PP) to form thiamine monophosphate (TMP). The polypeptide is Thiamine-phosphate synthase (Pectobacterium atrosepticum (strain SCRI 1043 / ATCC BAA-672) (Erwinia carotovora subsp. atroseptica)).